The sequence spans 240 residues: Manganese transport system ATP-binding protein MntB (240 aa).

One can recognise an ABC transporter domain in the interval 1 to 233 (MEIQGLTIAY…KIQFAYGDAP (233 aa)). 33-40 (GPNGAGKS) is a binding site for ATP.

This sequence belongs to the ABC transporter superfamily.

The protein localises to the cell membrane. In terms of biological role, this protein is probably a component of a manganese permease, a binding protein-dependent, ATP-driven transport system. Probably responsible for energy coupling to the transport system. In Listeria monocytogenes serovar 1/2a (strain ATCC BAA-679 / EGD-e), this protein is Manganese transport system ATP-binding protein MntB (mntB).